Here is a 217-residue protein sequence, read N- to C-terminus: Claudin-9 (217 aa).

At 1 to 12 (MASTGLELLGMT) the chain is on the cytoplasmic side. The helical transmembrane segment at 13-33 (LAVLGWLGTLVSCALPLWKVT) threads the bilayer. Over 34–81 (AFIGNSIVVAQVVWEGLWMSCVVQSTGQMQCKVYDSLLALPQDLQAAR) the chain is Extracellular. The helical transmembrane segment at 82-102 (ALCVVALLLALLGLLVAITGA) threads the bilayer. Topologically, residues 103-116 (QCTTCVEDEGAKAR) are cytoplasmic. A helical transmembrane segment spans residues 117 to 137 (IVLTAGVLLLLSGILVLIPVC). Over 138–159 (WTAHAIIQDFYNPLVAEALKRE) the chain is Extracellular. A helical transmembrane segment spans residues 160–180 (LGASLYLGWAAAALLMLGGGL). Residues 181–217 (LCCTCPPSHFERPRGPRLGYSIPSRSGASGLDKRDYV) lie on the Cytoplasmic side of the membrane.

Belongs to the claudin family. In terms of assembly, interacts with CLDN1, CD81 and OCLN.

It localises to the cell junction. Its subcellular location is the tight junction. It is found in the cell membrane. Plays a major role in tight junction-specific obliteration of the intercellular space, through calcium-independent cell-adhesion activity. The chain is Claudin-9 (Cldn9) from Mus musculus (Mouse).